Consider the following 310-residue polypeptide: Zinc-finger homeodomain protein 3 (310 aa).

The segment at 1–64 is disordered; sequence MEIASQEDPI…GLGKNHDHSH (64 aa). Residues 39-56 are compositionally biased toward polar residues; the sequence is LNITTSNPLLVSSNSNGL. The segment at 87 to 136 adopts a ZF-HD dimerization-type; degenerate zinc-finger fold; that stretch reads YKECLKNHAATMGGNAIDGCGEFMPSGEEGSIEALTCSVCNCHRNFHRRE. Disordered regions lie at residues 184–220 and 281–310; these read TAGSNSESEDLMEEEGGGSLTFRQPPPPPSPYSYGHN and LSKKSNNVSNNVDLSAGNNDITENLASTNP. A compositionally biased stretch (acidic residues) spans 190–199; that stretch reads ESEDLMEEEG. The segment at residues 222 to 285 is a DNA-binding region (homeobox); sequence KKRFRTKFTQ…NNKQNLSKKS (64 aa). Over residues 281–291 the composition is skewed to low complexity; it reads LSKKSNNVSNN. The span at 292-310 shows a compositional bias: polar residues; sequence VDLSAGNNDITENLASTNP.

Homo- and heterodimer with other ZFHD proteins. Interacts with MIF2 and MIF3; these interactions prevent nuclear localization and DNA-binding to inhibit transcription regulation activity. Binds to ZHD1, ZHD2 and ZHD11. Interacts with HIPP30. Interacts with KIN10, KIN11 and FLZ8. In terms of tissue distribution, mostly expressed in flowers and inflorescence.

The protein resides in the nucleus. In terms of biological role, putative transcription factor. The polypeptide is Zinc-finger homeodomain protein 3 (ZHD3) (Arabidopsis thaliana (Mouse-ear cress)).